The following is a 164-amino-acid chain: S-ribosylhomocysteine lyase (164 aa).

Fe cation is bound by residues histidine 61, histidine 65, and cysteine 131.

Belongs to the LuxS family. As to quaternary structure, homodimer. Fe cation is required as a cofactor.

It carries out the reaction S-(5-deoxy-D-ribos-5-yl)-L-homocysteine = (S)-4,5-dihydroxypentane-2,3-dione + L-homocysteine. Its function is as follows. Involved in the synthesis of autoinducer 2 (AI-2) which is secreted by bacteria and is used to communicate both the cell density and the metabolic potential of the environment. The regulation of gene expression in response to changes in cell density is called quorum sensing. Catalyzes the transformation of S-ribosylhomocysteine (RHC) to homocysteine (HC) and 4,5-dihydroxy-2,3-pentadione (DPD). The sequence is that of S-ribosylhomocysteine lyase from Bifidobacterium longum (strain NCC 2705).